We begin with the raw amino-acid sequence, 236 residues long: MREDDTHLPTGCGALDELLGGGVERGTVTQLYGPPAAGKTNVALTTAVTTAAAGGLAVYVDTEGLSLARFQQLLEARATDPEAASANVIVSDAHDFDEQAQAVRDTADFADRADLIVVDSVTGFYRLARGGDDTTGDALRQVADQITHLLSLARKHDLAVVVTNQVFTDVDNDSDRARPLGGHTLAHWTGTVLRLDRFRGGTRRATLEKHRAKPDGEHAQFQITDGGIDAASADDY.

It belongs to the eukaryotic RecA-like protein family. RadB subfamily.

Involved in DNA repair and in homologous recombination. May regulate the cleavage reactions of the branch-structured DNA. Has a very weak ATPase activity that is not stimulated by DNA. Binds DNA but does not promote DNA strands exchange. The protein is DNA repair and recombination protein RadB of Halobacterium salinarum (strain ATCC 29341 / DSM 671 / R1).